A 277-amino-acid polypeptide reads, in one-letter code: Proteasome assembly chaperone 1 (277 aa).

This sequence belongs to the PSMG1 family. As to quaternary structure, forms a heterodimer with psmg2. Post-translationally, degraded by the proteasome upon completion of 20S proteasome maturation.

The protein resides in the cytoplasm. It localises to the endoplasmic reticulum. In terms of biological role, chaperone protein which promotes assembly of the 20S proteasome as part of a heterodimer with psmg2. The sequence is that of Proteasome assembly chaperone 1 from Danio rerio (Zebrafish).